Here is a 181-residue protein sequence, read N- to C-terminus: Capsid protein VP4 (181 aa).

The protein resides in the virion. In terms of biological role, VP4 self-assembles to form, together with capsid protein VP10, an icosahedral caspid of 87 nm in diameter, with a T=43 symmetry and composed of 420 hexamers and 12 pentamers. VP4 proteins arrange into hexons, while VP10 proteins form the pentameric densities located at the 5-fold axes in the virion. The stoichiometry of VP4:VP10 is 42:1. The sequence is that of Capsid protein VP4 from Sulfolobus (SPV1).